Here is a 124-residue protein sequence, read N- to C-terminus: Large ribosomal subunit protein bL12 (124 aa).

The protein belongs to the bacterial ribosomal protein bL12 family. As to quaternary structure, homodimer. Part of the ribosomal stalk of the 50S ribosomal subunit. Forms a multimeric L10(L12)X complex, where L10 forms an elongated spine to which 2 to 4 L12 dimers bind in a sequential fashion. Binds GTP-bound translation factors.

In terms of biological role, forms part of the ribosomal stalk which helps the ribosome interact with GTP-bound translation factors. Is thus essential for accurate translation. This chain is Large ribosomal subunit protein bL12, found in Azobacteroides pseudotrichonymphae genomovar. CFP2.